The primary structure comprises 421 residues: ATP-dependent RNA helicase RhlB (421 aa).

The short motif at 9 to 37 is the Q motif element; sequence QKFSDFALHPKVIEALENKGFHNCTPIQA. The Helicase ATP-binding domain occupies 40–219; the sequence is LPLTLAGRDV…FEQMNNAEYV (180 aa). 53-60 lines the ATP pocket; the sequence is AQTGTGKT. The DEAD box signature appears at 165–168; it reads DEAD. Residues 245–390 form the Helicase C-terminal domain; sequence RLLQTLIEEE…VSKYNPEALM (146 aa). A disordered region spans residues 393-421; sequence LPKPLRLTRSRPGNGPRRTGAPRNRRRSG. The span at 403–414 shows a compositional bias: low complexity; it reads RPGNGPRRTGAP.

This sequence belongs to the DEAD box helicase family. RhlB subfamily. Component of the RNA degradosome, which is a multiprotein complex involved in RNA processing and mRNA degradation.

Its subcellular location is the cytoplasm. It catalyses the reaction ATP + H2O = ADP + phosphate + H(+). Its function is as follows. DEAD-box RNA helicase involved in RNA degradation. Has RNA-dependent ATPase activity and unwinds double-stranded RNA. This is ATP-dependent RNA helicase RhlB from Citrobacter koseri (strain ATCC BAA-895 / CDC 4225-83 / SGSC4696).